The primary structure comprises 122 residues: Large ribosomal subunit protein uL14 (122 aa).

The protein belongs to the universal ribosomal protein uL14 family. Part of the 50S ribosomal subunit. Forms a cluster with proteins L3 and L19. In the 70S ribosome, L14 and L19 interact and together make contacts with the 16S rRNA in bridges B5 and B8.

In terms of biological role, binds to 23S rRNA. Forms part of two intersubunit bridges in the 70S ribosome. The protein is Large ribosomal subunit protein uL14 of Macrococcus caseolyticus (strain JCSC5402) (Macrococcoides caseolyticum).